A 531-amino-acid polypeptide reads, in one-letter code: T-complex protein 1 subunit zeta (531 aa).

Residue Ala2 is modified to N-acetylalanine. N6-acetyllysine is present on Lys5. Gly39 provides a ligand contact to ADP. Gly39 provides a ligand contact to ATP. A Mg(2+)-binding site is contributed by Asp90. Gly91, Thr92, Thr93, Ser94, Thr158, and Lys159 together coordinate ADP. Gly91, Thr92, and Thr93 together coordinate ATP. Position 199 is an N6-acetyllysine (Lys199). Ser205 carries the post-translational modification Phosphoserine. Lys251 is covalently cross-linked (Glycyl lysine isopeptide (Lys-Gly) (interchain with G-Cter in SUMO2)). 4 positions are modified to N6-acetyllysine: Lys287, Lys365, Lys377, and Lys388. Ala411 contributes to the ADP binding site. Ala411, Gly412, Asp496, and Lys501 together coordinate ATP. Asp496 serves as a coordination point for ADP.

It belongs to the TCP-1 chaperonin family. Component of the chaperonin-containing T-complex (TRiC), a hexadecamer composed of two identical back-to-back stacked rings enclosing a protein folding chamber. Each ring is made up of eight different subunits: TCP1/CCT1, CCT2, CCT3, CCT4, CCT5, CCT6A/CCT6, CCT7, CCT8. Interacts with PACRG.

It localises to the cytoplasm. The catalysed reaction is ATP + H2O = ADP + phosphate + H(+). In terms of biological role, component of the chaperonin-containing T-complex (TRiC), a molecular chaperone complex that assists the folding of actin, tubulin and other proteins upon ATP hydrolysis. The TRiC complex mediates the folding of WRAP53/TCAB1, thereby regulating telomere maintenance. This Homo sapiens (Human) protein is T-complex protein 1 subunit zeta (CCT6A).